Here is a 177-residue protein sequence, read N- to C-terminus: Transcriptional regulator MET31 (177 aa).

The C2H2-type zinc finger occupies 95–117 (YSCAKCQLKFSRSSDLRRHEKVH).

Interacts with MET4 and MET28.

Its subcellular location is the cytoplasm. It is found in the nucleus. In terms of biological role, auxiliary transcriptional regulator of sulfur amino acid metabolism. Involved in the transcriptional activation of MET28. In Saccharomyces cerevisiae (strain ATCC 204508 / S288c) (Baker's yeast), this protein is Transcriptional regulator MET31 (MET31).